Here is a 31-residue protein sequence, read N- to C-terminus: Cytochrome b6-f complex subunit 6 (31 aa).

A helical transmembrane segment spans residues isoleucine 4–serine 26.

The protein belongs to the PetL family. In terms of assembly, the 4 large subunits of the cytochrome b6-f complex are cytochrome b6, subunit IV (17 kDa polypeptide, PetD), cytochrome f and the Rieske protein, while the 4 small subunits are PetG, PetL, PetM and PetN. The complex functions as a dimer.

It is found in the plastid. The protein resides in the chloroplast thylakoid membrane. Functionally, component of the cytochrome b6-f complex, which mediates electron transfer between photosystem II (PSII) and photosystem I (PSI), cyclic electron flow around PSI, and state transitions. PetL is important for photoautotrophic growth as well as for electron transfer efficiency and stability of the cytochrome b6-f complex. This Lactuca sativa (Garden lettuce) protein is Cytochrome b6-f complex subunit 6.